Consider the following 438-residue polypeptide: Ribosomal protein uS12 methylthiotransferase RimO (438 aa).

The region spanning 5–115 is the MTTase N-terminal domain; that stretch reads PRVGFVSLGC…VMSAVHTHLP (111 aa). [4Fe-4S] cluster contacts are provided by Cys14, Cys50, Cys79, Cys146, Cys150, and Cys153. In terms of domain architecture, Radical SAM core spans 132-369; it reads LTPKHYAYLK…MAVQAEISAR (238 aa). The TRAM domain occupies 372 to 438; sequence ERRVGQTLQV…SEHDLWGERR (67 aa).

Belongs to the methylthiotransferase family. RimO subfamily. [4Fe-4S] cluster serves as cofactor.

The protein localises to the cytoplasm. It catalyses the reaction L-aspartate(89)-[ribosomal protein uS12]-hydrogen + (sulfur carrier)-SH + AH2 + 2 S-adenosyl-L-methionine = 3-methylsulfanyl-L-aspartate(89)-[ribosomal protein uS12]-hydrogen + (sulfur carrier)-H + 5'-deoxyadenosine + L-methionine + A + S-adenosyl-L-homocysteine + 2 H(+). Catalyzes the methylthiolation of an aspartic acid residue of ribosomal protein uS12. In Chromobacterium violaceum (strain ATCC 12472 / DSM 30191 / JCM 1249 / CCUG 213 / NBRC 12614 / NCIMB 9131 / NCTC 9757 / MK), this protein is Ribosomal protein uS12 methylthiotransferase RimO.